Consider the following 912-residue polypeptide: MGRDARRLPLLPFLLLLLAAAAGVAESATDAEAIHDLARSVPALGWDGDNVCGFEGVTCERGGAGKVTELNLADRGLSGTLPDSLSSLTSLTALQLQGNALTGAVPSLARMGSLARLALDGNAFTSLPPDFLHGLTSLQYLTMENLPLPPWPVPDAIANCSSLDTFSASNASISGPFPAVLATLVSLRNLRLSYNNLTGGLPPELSSLIAMESLQLNNQRSDDKLSGPIDVIASMKSLKLLWIQSNKFTGPIPDLNGTQLEAFNVRDNMLTGVVPPSLTGLMSLKNVSLSNNNFQGPKPAFAAIPGQDEDSGNGFCLNTPGPCSPLTTTLLQVAEGFGYPYELAKTWKGNDPCSPAWVGIVCTSSDVSMINLSRKNLSGRISPALANLTRLARLDLSNNNLTGVIPDVLTTLPSLTVLNVANNRLTGEVPKFKPSVNVLAQGNLFGQSSGSSGGGGGSDGDSSSSDSAGGGKSKPNTGMIIGIIVAVIILFACIALLVHHRKKKNVEKFRPVSTKTSPAESEMMKIQVVGANGISNGSSAFPTELYSHVSAANSSNISELFESHGMQLSVEVLLKATNNFSEDCILGRGGFGVVFKGNLNGKLVAVKRCDSGTMGTKGQEEFLAEIDVLRKVRHRHLVALLGYCTHGNERLLVYEYMSGGTLREHLCDLQQSGFIPLTWTQRMTIALDVARGIEYLHGLAQETFIHRDLKPSNILLDQDLRAKVSDFGLVKLAKDTDKSLMTRIAGTFGYLAPEYATTGKVTTKVDVYAYGVILMEMITGRKVLDDSLPDDETHLVTIFRRNILDKEKFRKFVDPTLELSAEGWTSLLEVADLARHCTAREPYQRPDMCHCVNRLSSLVDQWKPTNIDEDDYEGETSEMGLHQQLEKWRCDDFTISDSDTFGSFNVPRKYNG.

An N-terminal signal peptide occupies residues 1 to 27 (MGRDARRLPLLPFLLLLLAAAAGVAES). Residues 28 to 477 (ATDAEAIHDL…AGGGKSKPNT (450 aa)) lie on the Extracellular side of the membrane. 3 LRR repeats span residues 64–88 (AGKV…LSSL), 89–111 (TSLT…LARM), and 112–134 (GSLA…FLHG). N159, N170, N196, N256, N286, N371, N376, N387, and N400 each carry an N-linked (GlcNAc...) asparagine glycan. LRR repeat units lie at residues 184–208 (LVSL…LSSL), 235–261 (MKSL…TQLE), 281–303 (LMSL…AFAA), 364–388 (SSDV…LANL), 389–411 (TRLA…VLTT), and 413–438 (PSLT…SVNV). Positions 448 to 472 (SSGSSGGGGGSDGDSSSSDSAGGGK) are disordered. A helical transmembrane segment spans residues 478-498 (GMIIGIIVAVIILFACIALLV). The Cytoplasmic segment spans residues 499-912 (HHRKKKNVEK…SFNVPRKYNG (414 aa)). Positions 580-859 (FSEDCILGRG…HCVNRLSSLV (280 aa)) constitute a Protein kinase domain. Residues 586–594 (LGRGGFGVV) and K607 each bind ATP. The active-site Proton acceptor is D708.

This sequence belongs to the protein kinase superfamily. Ser/Thr protein kinase family. The cofactor is Mn(2+). In terms of tissue distribution, expressed in young and mature leaves.

The protein resides in the cell membrane. It carries out the reaction L-seryl-[protein] + ATP = O-phospho-L-seryl-[protein] + ADP + H(+). The catalysed reaction is L-threonyl-[protein] + ATP = O-phospho-L-threonyl-[protein] + ADP + H(+). Functionally, transmembrane kinase receptor involved in the regulation of reactive oxygen species (ROS) homeostasis, chloroplast development and leaf senescence. The sequence is that of Receptor protein kinase WSS1 from Oryza sativa subsp. japonica (Rice).